A 444-amino-acid chain; its full sequence is Orexin receptor type 2 (444 aa).

The segment covering 1–10 has biased composition (basic and acidic residues); it reads MSGTKLEDSP. The interval 1–30 is disordered; sequence MSGTKLEDSPPCRNWSSAPELNETQEPFLN. At 1–54 the chain is on the extracellular side; sequence MSGTKLEDSPPCRNWSSAPELNETQEPFLNPTDYDDEEFLRYLWREYLHPKEYE. N14 and N22 each carry an N-linked (GlcNAc...) asparagine glycan. Positions 14-27 are enriched in polar residues; the sequence is NWSSAPELNETQEP. The segment at 33-49 is required for response to orexin-A; that stretch reads DYDDEEFLRYLWREYLH. Residues 55-75 traverse the membrane as a helical segment; it reads WVLIAGYIIVFVVALVGNVLV. The Cytoplasmic segment spans residues 76–88; that stretch reads CVAVWKNHHMRTV. A helical membrane pass occupies residues 89–110; that stretch reads TNYFIVNLSLADVLVTITCLPA. The Extracellular portion of the chain corresponds to 111 to 127; it reads TLVVDITETWFFGQSLC. Cysteines 127 and 210 form a disulfide. A helical membrane pass occupies residues 128–150; the sequence is KVIPYLQTVSVSVSVLTLSCIAL. Residues 151-170 lie on the Cytoplasmic side of the membrane; the sequence is DRWYAICHPLMFKSTAKRAR. Residues 171–191 traverse the membrane as a helical segment; it reads NSIVIIWIVSCIIMIPQAIVM. The Extracellular portion of the chain corresponds to 192–222; the sequence is ECSTMLPGLANKTTLFTVCDERWGGEIYPKM. The N-linked (GlcNAc...) asparagine glycan is linked to N202. Residues 223-243 traverse the membrane as a helical segment; that stretch reads YHICFFLVTYMAPLCLMVLAY. Residues 244–304 are Cytoplasmic-facing; the sequence is LQIFRKLWCR…QIRARRKTAR (61 aa). The chain crosses the membrane as a helical span at residues 305-326; that stretch reads MLMVVLLVFAICYLPISILNVL. The Extracellular portion of the chain corresponds to 327–342; sequence KRVFGMFTHTEDRETV. Residues 343–366 form a helical membrane-spanning segment; the sequence is YAWFTFSHWLVYANSAANPIIYNF. Residues 367-444 are Cytoplasmic-facing; the sequence is LSGKFREEFK…ANGAGPLQNW (78 aa).

This sequence belongs to the G-protein coupled receptor 1 family.

It localises to the cell membrane. In terms of biological role, nonselective, high-affinity receptor for both orexin-A and orexin-B neuropeptides. Triggers an increase in cytoplasmic Ca(2+) levels in response to orexin-A binding. The protein is Orexin receptor type 2 (HCRTR2) of Canis lupus familiaris (Dog).